A 183-amino-acid polypeptide reads, in one-letter code: Putative NAD(P)H nitroreductase YdjA (183 aa).

Residues 10–12, arginine 35, and histidine 39 each bind FMN; that span reads RRS. 121–126 contributes to the NAD(+) binding site; that stretch reads AAVAQG. 131-133 provides a ligand contact to FMN; the sequence is WRS.

Belongs to the nitroreductase family. As to quaternary structure, homodimer. Requires FMN as cofactor.

This Escherichia coli O157:H7 protein is Putative NAD(P)H nitroreductase YdjA (ydjA).